Here is a 520-residue protein sequence, read N- to C-terminus: Signal peptide peptidase-like 2A (520 aa).

The N-terminal stretch at 1 to 25 (MGPQRRLSPAGAALLWGFLLQLTAA) is a signal peptide. The Lumenal segment spans residues 26–172 (QEAILHASGN…PSWPNFDYTM (147 aa)). Residues Asn58, Asn66, Asn74, Asn116, Asn126, and Asn149 are each glycosylated (N-linked (GlcNAc...) asparagine). Residues 63-151 (SLMNLTSTPL…YKDFRDMNQT (89 aa)) enclose the PA domain. A glycan (N-linked (GlcNAc...) (complex) asparagine) is linked at Asn155. A helical transmembrane segment spans residues 173-193 (VVIFVIAVFTVALGGYWSGLV). Over 194–220 (ELENLKAVTTEDREMRKKKEEYLTFSP) the chain is Cytoplasmic. Residues 221 to 241 (LTVVIFVVICCVMMVLLYFFY) traverse the membrane as a helical segment. Residues 242–247 (KWLVYV) are Lumenal-facing. A helical transmembrane segment spans residues 248 to 268 (MIAIFCIASAMSLYNCLAALI). The Cytoplasmic segment spans residues 269–285 (HKIPYGQCTIACRGKNM). A helical membrane pass occupies residues 286–306 (EVRLIFLSGLCIAVAVVWAVF). At 307–311 (RNEDR) the chain is on the lumenal side. Residues 312–332 (WAWILQDILGIAFCLNLIKTL) form a helical membrane-spanning segment. Over 333 to 340 (KLPNFKSC) the chain is Cytoplasmic. Residues 341–361 (VILLGLLLLYDVFFVFITPFI) traverse the membrane as a helical segment. The active site involves Asp351. The Lumenal segment spans residues 362 to 399 (TKNGESIMVELAAGPFGNNEKLPVVIRVPKLIYFSVMS). Residues 400-420 (VCLMPVSILGFGDIIVPGLLI) form a helical membrane-spanning segment. Asp412 is an active-site residue. The Cytoplasmic segment spans residues 421–437 (AYCRRFDVQTGSSYIYY). Residues 438–458 (VSSTVAYAIGMILTFVVLVLM) form a helical membrane-spanning segment. Residues 459-460 (KK) lie on the Lumenal side of the membrane. The helical transmembrane segment at 461–481 (GQPALLYLVPCTLITASVVAW) threads the bilayer. Positions 463–465 (PAL) match the PAL motif. At 482 to 520 (RRKEMKKFWKGNSYQMMDHLDCATNEENPVISGEQIVQQ) the chain is on the cytoplasmic side. The YXXo lysosomal targeting motif signature appears at 495-498 (YQMM).

Belongs to the peptidase A22B family. Interacts with ITM2B. In terms of processing, glycosylated. Ubiquitous.

It localises to the late endosome membrane. The protein resides in the lysosome membrane. It is found in the membrane. Its function is as follows. Intramembrane-cleaving aspartic protease (I-CLiP) that cleaves type II membrane signal peptides in the hydrophobic plane of the membrane. Functions in FASLG, ITM2B and TNF processing. Catalyzes the intramembrane cleavage of the anchored fragment of shed TNF-alpha (TNF), which promotes the release of the intracellular domain (ICD) for signaling to the nucleus. Also responsible for the intramembrane cleavage of Fas antigen ligand FASLG, which promotes the release of the intracellular FasL domain (FasL ICD). Essential for degradation of the invariant chain CD74 that plays a central role in the function of antigen-presenting cells in the immune system. Plays a role in the regulation of innate and adaptive immunity. Catalyzes the intramembrane cleavage of the simian foamy virus envelope glycoprotein gp130 independently of prior ectodomain shedding by furin or furin-like proprotein convertase (PC)-mediated cleavage proteolysis. The polypeptide is Signal peptide peptidase-like 2A (Homo sapiens (Human)).